The chain runs to 247 residues: UPF0246 protein LSL_1719 (247 aa).

Belongs to the UPF0246 family.

The chain is UPF0246 protein LSL_1719 from Ligilactobacillus salivarius (strain UCC118) (Lactobacillus salivarius).